Consider the following 440-residue polypeptide: Glutamate--tRNA ligase 2 (440 aa).

The 'HIGH' region signature appears at 8–18; sequence PSPTGYLHVGN. Positions 239-243 match the 'KMSKS' region motif; the sequence is ALSKR. ATP is bound at residue Lys-242.

This sequence belongs to the class-I aminoacyl-tRNA synthetase family. Glutamate--tRNA ligase type 1 subfamily. In terms of assembly, monomer.

The protein localises to the cytoplasm. It carries out the reaction tRNA(Glu) + L-glutamate + ATP = L-glutamyl-tRNA(Glu) + AMP + diphosphate. Catalyzes the attachment of glutamate to tRNA(Glu) in a two-step reaction: glutamate is first activated by ATP to form Glu-AMP and then transferred to the acceptor end of tRNA(Glu). The chain is Glutamate--tRNA ligase 2 from Dinoroseobacter shibae (strain DSM 16493 / NCIMB 14021 / DFL 12).